The following is a 45-amino-acid chain: Movement protein P3a (45 aa).

A helical transmembrane segment spans residues 9–29 (FALGFSSAIPFSVAGLYFVYL).

It belongs to the polerovirus movement protein P3a family. Homodimer. Heterodimer with movement protein P17.

The protein resides in the host cell junction. It localises to the host plasmodesma. It is found in the host Golgi apparatus. The protein localises to the host chloroplast envelope. Its subcellular location is the host mitochondrion outer membrane. Functionally, together with movement protein P17, plays an essential role in virus long distance movement. This is Movement protein P3a (ORF3a) from Solanum tuberosum (Potato).